The primary structure comprises 52 residues: Large ribosomal subunit protein bL33A (52 aa).

The protein belongs to the bacterial ribosomal protein bL33 family.

This is Large ribosomal subunit protein bL33A from Staphylococcus aureus (strain USA300).